Consider the following 346-residue polypeptide: Low-temperature-induced cysteine proteinase (346 aa).

The propeptide at 1 to 17 (KLSKNKSDRYLPKVGDS) is activation peptide. 5 cysteine pairs are disulfide-bonded: Cys39-Cys81, Cys73-Cys114, Cys172-Cys223, Cys256-Cys268, and Cys262-Cys283. The active site involves Cys42. Catalysis depends on residues His178 and Asn198. Asn215 is a glycosylation site (N-linked (GlcNAc...) asparagine). Residues 238 to 346 (NPPKPAPSPP…FGNGGKKSSS (109 aa)) constitute a propeptide, removed in mature form.

This sequence belongs to the peptidase C1 family.

This is Low-temperature-induced cysteine proteinase from Solanum lycopersicum (Tomato).